The following is a 312-amino-acid chain: MANDNGIKHFIDLSTVPATELRAILEDAKARKARLKAGEVERPYAGKVLAMIFEKPSTRTRVSFDVGMRQLGGETIMLTGSEMQLGRSEAIADTAKVLSRYVDAIMIRTTAHERMLELAEYATVPVINALTDDTHPCQIMADVLTYEEHRGPIKGKTFAWMGDGNNVLHSLVEAAARFDFNVNIATPKGSEPKSQYIDWARANGAGIMSTTDPEKAASGADCIVTDTWVSMGQEDHARGHNVFIPYQVNANLMAKADPKALFMHCLPAHRGEEVTDEVIDGPQSVVFDEAENRLHAQKAILAWCLQDRGLGA.

Carbamoyl phosphate contacts are provided by residues 57–60 (STRT), Q84, R108, and 135–138 (HPCQ). L-ornithine-binding positions include N166, D226, and 230 to 231 (SM). Carbamoyl phosphate-binding positions include 265-266 (CL) and R293.

This sequence belongs to the aspartate/ornithine carbamoyltransferase superfamily. OTCase family.

The protein resides in the cytoplasm. The catalysed reaction is carbamoyl phosphate + L-ornithine = L-citrulline + phosphate + H(+). Its pathway is amino-acid biosynthesis; L-arginine biosynthesis; L-arginine from L-ornithine and carbamoyl phosphate: step 1/3. Functionally, reversibly catalyzes the transfer of the carbamoyl group from carbamoyl phosphate (CP) to the N(epsilon) atom of ornithine (ORN) to produce L-citrulline. The polypeptide is Ornithine carbamoyltransferase (Brucella suis biovar 1 (strain 1330)).